Reading from the N-terminus, the 156-residue chain is Small ribosomal subunit protein uS7 (156 aa).

It belongs to the universal ribosomal protein uS7 family. In terms of assembly, part of the 30S ribosomal subunit. Contacts proteins S9 and S11.

In terms of biological role, one of the primary rRNA binding proteins, it binds directly to 16S rRNA where it nucleates assembly of the head domain of the 30S subunit. Is located at the subunit interface close to the decoding center, probably blocks exit of the E-site tRNA. This is Small ribosomal subunit protein uS7 from Rhodococcus erythropolis (strain PR4 / NBRC 100887).